Consider the following 120-residue polypeptide: Large ribosomal subunit protein uL22 (120 aa).

Belongs to the universal ribosomal protein uL22 family. In terms of assembly, part of the 50S ribosomal subunit.

Its function is as follows. This protein binds specifically to 23S rRNA; its binding is stimulated by other ribosomal proteins, e.g. L4, L17, and L20. It is important during the early stages of 50S assembly. It makes multiple contacts with different domains of the 23S rRNA in the assembled 50S subunit and ribosome. Functionally, the globular domain of the protein is located near the polypeptide exit tunnel on the outside of the subunit, while an extended beta-hairpin is found that lines the wall of the exit tunnel in the center of the 70S ribosome. The polypeptide is Large ribosomal subunit protein uL22 (Borreliella afzelii (strain PKo) (Borrelia afzelii)).